Here is a 175-residue protein sequence, read N- to C-terminus: Replication restart protein PriC (175 aa).

Belongs to the PriC family. Monomer. Oligomerizes in the absence of DNA. Component of the replication restart primosome, which is composed of PriA, PriB, PriC, DnaB and DnaT; DnaG primase associates transiently with this complex. Interacts with the C-terminus of SSB; this interaction is required for DnaB loading onto substrate replication forks. Interacts with DnaB alone and in the DnaB-DnaC complex, probably 1:1 binding with DnaB.

Its function is as follows. Involved in the restart of stalled replication forks, which reloads the replicative helicase (DnaB) on sites other than the origin of replication. Recognizes abandoned replication forks and remodels DNA single-stranded binding protein (SSB) on ssDNA to uncover a loading site for DnaB. There are several restart pathways, the PriA-PriC pathway is a minor restart pathway. Also part of the minor PriC-Rep pathway for restart of stalled replication forks, which has a different substrate specificity than PriA. priB and priC have redundant roles in the cell. Stimulates the 3'-5' helicase activity of Rep helicase in vitro. In vitro can load the DnaB replicative helicase from a DnaB-DnaC complex on an SSB-coated stalled replication fork with no leading- or lagging-strand (or with a gap between the leading strand and fork junction) in the absence of other primosome proteins (PriA, PriB or DnaT). Also part of the major restart pathway with PriA, PriB, DnaB, DnaT and DnaG primase. PriC may contribute to the stability of the preprimosome complex. Preferentially binds approximately 7-9 nucleotides of single-stranded (ss)DNA, also binds double-stranded (ds)DNA. PriB is probably more important in the cell than PriC. This is Replication restart protein PriC from Escherichia coli (strain K12).